The following is an 864-amino-acid chain: Protein translocase subunit SecA (864 aa).

ATP is bound by residues glutamine 87, 105–109 (GEGKT), and aspartate 512.

This sequence belongs to the SecA family. As to quaternary structure, monomer and homodimer. Part of the essential Sec protein translocation apparatus which comprises SecA, SecYEG and auxiliary proteins SecDF-YajC and YidC.

The protein localises to the cell inner membrane. It localises to the cytoplasm. The enzyme catalyses ATP + H2O + cellular proteinSide 1 = ADP + phosphate + cellular proteinSide 2.. Functionally, part of the Sec protein translocase complex. Interacts with the SecYEG preprotein conducting channel. Has a central role in coupling the hydrolysis of ATP to the transfer of proteins into and across the cell membrane, serving as an ATP-driven molecular motor driving the stepwise translocation of polypeptide chains across the membrane. The protein is Protein translocase subunit SecA of Buchnera aphidicola subsp. Cinara cedri (strain Cc).